We begin with the raw amino-acid sequence, 153 residues long: MSARISKQLRLSVPPCLANRTTASNSSSCVTEVEPLLQSFSSTLVLIVLATVIFCLVVLSLSTFHMHKSKMKKRKIEKAQEEYERDHCSPKAERGHLHGMGRGGTHGSPTSPTIQRKEHIRLDLGASVNEEPQLEASGLDRATEHLQQSVVLS.

The N-terminal stretch at M1–A18 is a signal peptide. 2 N-linked (GlcNAc...) asparagine glycosylation sites follow: N19 and N25. Over N19–T43 the chain is Extracellular. Residues L44–F64 form a helical membrane-spanning segment. Residues H65–S153 are Cytoplasmic-facing. Positions K75–Q115 are disordered. The span at E77–H96 shows a compositional bias: basic and acidic residues.

The protein resides in the membrane. This is an uncharacterized protein from Xenopus tropicalis (Western clawed frog).